Reading from the N-terminus, the 979-residue chain is UPF0182 protein MT0070 (979 aa).

A run of 7 helical transmembrane segments spans residues 19–41 (LVTAGMGMLALLLFGPRLVDIYV), 63–85 (LAIVAAVALVVAGIVLAALLLAY), 114–136 (LFGWGIAVTLGVVCGLIASFDWV), 174–196 (WLFVAVVLAFLASLLTHYLFGGL), 208–230 (AARVQLAVFAGAVVLLKAVAYWL), 261–280 (LVLVAIAVLCAVSFFTAIFL), and 285–307 (IPAMAAALLVLSAILVGGLWPLL). A disordered region spans residues 894–948 (VFGPGTGRVATXPGGDAASAPPPGAGGPAPPQGVPPPRTTQPPAAPPRGPDVPPA). The span at 913 to 946 (APPPGAGGPAPPQGVPPPRTTQPPAAPPRGPDVP) shows a compositional bias: pro residues.

It belongs to the UPF0182 family.

Its subcellular location is the cell membrane. The sequence is that of UPF0182 protein MT0070 from Mycobacterium tuberculosis (strain CDC 1551 / Oshkosh).